A 155-amino-acid polypeptide reads, in one-letter code: 6,7-dimethyl-8-ribityllumazine synthase (155 aa).

Residues Phe24, 58-60 (AFE), and 82-84 (VII) each bind 5-amino-6-(D-ribitylamino)uracil. Residue 87–88 (ST) participates in (2S)-2-hydroxy-3-oxobutyl phosphate binding. The active-site Proton donor is the His90. A 5-amino-6-(D-ribitylamino)uracil-binding site is contributed by Phe115. (2S)-2-hydroxy-3-oxobutyl phosphate is bound at residue Arg129.

This sequence belongs to the DMRL synthase family.

The catalysed reaction is (2S)-2-hydroxy-3-oxobutyl phosphate + 5-amino-6-(D-ribitylamino)uracil = 6,7-dimethyl-8-(1-D-ribityl)lumazine + phosphate + 2 H2O + H(+). It participates in cofactor biosynthesis; riboflavin biosynthesis; riboflavin from 2-hydroxy-3-oxobutyl phosphate and 5-amino-6-(D-ribitylamino)uracil: step 1/2. Its function is as follows. Catalyzes the formation of 6,7-dimethyl-8-ribityllumazine by condensation of 5-amino-6-(D-ribitylamino)uracil with 3,4-dihydroxy-2-butanone 4-phosphate. This is the penultimate step in the biosynthesis of riboflavin. This is 6,7-dimethyl-8-ribityllumazine synthase from Chlorobium limicola (strain DSM 245 / NBRC 103803 / 6330).